The sequence spans 150 residues: Cell division protein SepF (150 aa).

Belongs to the SepF family. In terms of assembly, homodimer. Interacts with FtsZ.

Its subcellular location is the cytoplasm. Its function is as follows. Cell division protein that is part of the divisome complex and is recruited early to the Z-ring. Probably stimulates Z-ring formation, perhaps through the cross-linking of FtsZ protofilaments. Its function overlaps with FtsA. This is Cell division protein SepF from Clostridium botulinum (strain Kyoto / Type A2).